An 890-amino-acid chain; its full sequence is Protein translocase subunit SecA (890 aa).

ATP-binding positions include glutamine 85, 103–107 (GEGKT), and aspartate 491.

Belongs to the SecA family. Monomer and homodimer. Part of the essential Sec protein translocation apparatus which comprises SecA, SecYEG and auxiliary proteins SecDF. Other proteins may also be involved.

It localises to the cell membrane. It is found in the cytoplasm. The enzyme catalyses ATP + H2O + cellular proteinSide 1 = ADP + phosphate + cellular proteinSide 2.. Part of the Sec protein translocase complex. Interacts with the SecYEG preprotein conducting channel. Has a central role in coupling the hydrolysis of ATP to the transfer of proteins into and across the cell membrane, serving as an ATP-driven molecular motor driving the stepwise translocation of polypeptide chains across the membrane. The protein is Protein translocase subunit SecA of Mycoplasmoides gallisepticum (strain R(low / passage 15 / clone 2)) (Mycoplasma gallisepticum).